A 139-amino-acid polypeptide reads, in one-letter code: Putative pre-16S rRNA nuclease (139 aa).

Belongs to the YqgF nuclease family.

Its subcellular location is the cytoplasm. In terms of biological role, could be a nuclease involved in processing of the 5'-end of pre-16S rRNA. This is Putative pre-16S rRNA nuclease from Rubrobacter xylanophilus (strain DSM 9941 / JCM 11954 / NBRC 16129 / PRD-1).